The sequence spans 254 residues: Hydroxyacylglutathione hydrolase (254 aa).

Zn(2+)-binding residues include His-53, His-55, Asp-57, His-58, His-111, Asp-128, and His-166.

This sequence belongs to the metallo-beta-lactamase superfamily. Glyoxalase II family. Monomer. Requires Zn(2+) as cofactor.

The enzyme catalyses an S-(2-hydroxyacyl)glutathione + H2O = a 2-hydroxy carboxylate + glutathione + H(+). It functions in the pathway secondary metabolite metabolism; methylglyoxal degradation; (R)-lactate from methylglyoxal: step 2/2. In terms of biological role, thiolesterase that catalyzes the hydrolysis of S-D-lactoyl-glutathione to form glutathione and D-lactic acid. This Aeromonas salmonicida (strain A449) protein is Hydroxyacylglutathione hydrolase.